The following is a 279-amino-acid chain: Elongation factor Ts (279 aa).

Residues 80–83 are involved in Mg(2+) ion dislocation from EF-Tu; the sequence is TDFV.

Belongs to the EF-Ts family.

The protein localises to the cytoplasm. In terms of biological role, associates with the EF-Tu.GDP complex and induces the exchange of GDP to GTP. It remains bound to the aminoacyl-tRNA.EF-Tu.GTP complex up to the GTP hydrolysis stage on the ribosome. This Borreliella burgdorferi (strain ATCC 35210 / DSM 4680 / CIP 102532 / B31) (Borrelia burgdorferi) protein is Elongation factor Ts (tsf).